Here is a 380-residue protein sequence, read N- to C-terminus: Cytochrome b (380 aa).

Transmembrane regions (helical) follow at residues 34–54 (FGSL…LLAM), 78–99 (WLIR…FLHI), 114–134 (WNTG…GYVL), and 179–199 (FFAL…THLM). Heme b contacts are provided by histidine 84 and histidine 98. Histidine 183 and histidine 197 together coordinate heme b. Histidine 202 is a binding site for a ubiquinone. Helical transmembrane passes span 227 to 247 (LKDI…ALFS), 289 to 309 (LGGV…PFLH), 321 to 341 (LSQA…WVGS), and 348 to 368 (FIII…ILFP).

Belongs to the cytochrome b family. The cytochrome bc1 complex contains 11 subunits: 3 respiratory subunits (MT-CYB, CYC1 and UQCRFS1), 2 core proteins (UQCRC1 and UQCRC2) and 6 low-molecular weight proteins (UQCRH/QCR6, UQCRB/QCR7, UQCRQ/QCR8, UQCR10/QCR9, UQCR11/QCR10 and a cleavage product of UQCRFS1). This cytochrome bc1 complex then forms a dimer. Requires heme b as cofactor.

It localises to the mitochondrion inner membrane. Functionally, component of the ubiquinol-cytochrome c reductase complex (complex III or cytochrome b-c1 complex) that is part of the mitochondrial respiratory chain. The b-c1 complex mediates electron transfer from ubiquinol to cytochrome c. Contributes to the generation of a proton gradient across the mitochondrial membrane that is then used for ATP synthesis. The chain is Cytochrome b (MT-CYB) from Syrmaticus reevesii (Reeves's pheasant).